The sequence spans 205 residues: Proteasome subunit beta (205 aa).

Residues 1 to 9 (MNQTENMEG) constitute a propeptide, removed in mature form; by autocatalysis. Residue Thr-10 is the Nucleophile of the active site.

It belongs to the peptidase T1B family. The 20S proteasome core is composed of 14 alpha and 14 beta subunits that assemble into four stacked heptameric rings, resulting in a barrel-shaped structure. The two inner rings, each composed of seven catalytic beta subunits, are sandwiched by two outer rings, each composed of seven alpha subunits. The catalytic chamber with the active sites is on the inside of the barrel. Has a gated structure, the ends of the cylinder being occluded by the N-termini of the alpha-subunits. Is capped at one or both ends by the proteasome regulatory ATPase, PAN.

The protein resides in the cytoplasm. It carries out the reaction Cleavage of peptide bonds with very broad specificity.. With respect to regulation, the formation of the proteasomal ATPase PAN-20S proteasome complex, via the docking of the C-termini of PAN into the intersubunit pockets in the alpha-rings, triggers opening of the gate for substrate entry. Interconversion between the open-gate and close-gate conformations leads to a dynamic regulation of the 20S proteasome proteolysis activity. Functionally, component of the proteasome core, a large protease complex with broad specificity involved in protein degradation. The chain is Proteasome subunit beta from Methanosphaera stadtmanae (strain ATCC 43021 / DSM 3091 / JCM 11832 / MCB-3).